Reading from the N-terminus, the 197-residue chain is Phosphoheptose isomerase (197 aa).

An SIS domain is found at 40–197; the sequence is CIASIAQGGK…LVEHSIFGKQ (158 aa). 55-57 is a binding site for substrate; sequence NGG. His-64 and Glu-68 together coordinate Zn(2+). Residues Glu-68, 97–98, 123–125, Ser-128, and Gln-175 each bind substrate; these read ND and STS. The Zn(2+) site is built by Gln-175 and His-183.

The protein belongs to the SIS family. GmhA subfamily. As to quaternary structure, homotetramer. Zn(2+) is required as a cofactor.

The protein resides in the cytoplasm. The enzyme catalyses 2 D-sedoheptulose 7-phosphate = D-glycero-alpha-D-manno-heptose 7-phosphate + D-glycero-beta-D-manno-heptose 7-phosphate. Its pathway is carbohydrate biosynthesis; D-glycero-D-manno-heptose 7-phosphate biosynthesis; D-glycero-alpha-D-manno-heptose 7-phosphate and D-glycero-beta-D-manno-heptose 7-phosphate from sedoheptulose 7-phosphate: step 1/1. It functions in the pathway capsule biogenesis; capsule polysaccharide biosynthesis. Catalyzes the isomerization of sedoheptulose 7-phosphate in D-glycero-D-manno-heptose 7-phosphate. This chain is Phosphoheptose isomerase, found in Burkholderia mallei (strain ATCC 23344).